The sequence spans 281 residues: UPF0294 protein VP2298 (281 aa).

Belongs to the UPF0294 family.

It localises to the cytoplasm. This is UPF0294 protein VP2298 from Vibrio parahaemolyticus serotype O3:K6 (strain RIMD 2210633).